The chain runs to 86 residues: Large ribosomal subunit protein eL43 (86 aa).

Zn(2+)-binding residues include cysteine 38, cysteine 41, cysteine 57, and cysteine 60. A C4-type zinc finger spans residues 38-60 (CPFCGSTGTVRRVSVGVWSCRKC).

It belongs to the eukaryotic ribosomal protein eL43 family. Putative zinc-binding subfamily. In terms of assembly, part of the 50S ribosomal subunit. Zn(2+) is required as a cofactor.

Its function is as follows. Binds to the 23S rRNA. The chain is Large ribosomal subunit protein eL43 from Aeropyrum pernix (strain ATCC 700893 / DSM 11879 / JCM 9820 / NBRC 100138 / K1).